The primary structure comprises 180 residues: Peptidyl-tRNA hydrolase (180 aa).

Position 15 (tyrosine 15) interacts with tRNA. The active-site Proton acceptor is histidine 20. TRNA contacts are provided by phenylalanine 67, asparagine 69, and asparagine 115.

It belongs to the PTH family. Monomer.

The protein localises to the cytoplasm. The enzyme catalyses an N-acyl-L-alpha-aminoacyl-tRNA + H2O = an N-acyl-L-amino acid + a tRNA + H(+). Hydrolyzes ribosome-free peptidyl-tRNAs (with 1 or more amino acids incorporated), which drop off the ribosome during protein synthesis, or as a result of ribosome stalling. In terms of biological role, catalyzes the release of premature peptidyl moieties from peptidyl-tRNA molecules trapped in stalled 50S ribosomal subunits, and thus maintains levels of free tRNAs and 50S ribosomes. The chain is Peptidyl-tRNA hydrolase from Chlamydia pneumoniae (Chlamydophila pneumoniae).